A 496-amino-acid chain; its full sequence is Probable chlorophyll(ide) b reductase NYC1, chloroplastic (496 aa).

The N-terminal 43 residues, 1-43 (MTTLTKIQVYPQVLEHRLFFRDPIRVGSRLTCRERSNRVYVHR), are a transit peptide targeting the chloroplast. Helical transmembrane passes span 105 to 125 (YIVTMTSTGAILLIGFQLSGG) and 132 to 152 (LVWYSWLGGIIIGTMTGANMV). Residue 166–190 (ITGSTRGLGKALAREFLLSGDRVIV) coordinates NAD(+). Residues 195–224 (SESVDMTVKELEQNLKEIMSNASESARKKL) are a coiled coil. Tyr-330 (proton acceptor) is an active-site residue. A helical transmembrane segment spans residues 470–490 (WVSVFSLSVVCAFIILQSTTP).

It belongs to the short-chain dehydrogenases/reductases (SDR) family. In terms of assembly, interacts with NOL to form a complex that acts as a chlorophyll b reductase. Interacts with HCAR, RCCR, SGR1 and the LHCII complex. Part of a SGR1-CCE-LHCII complex, which acts in chlorophyll breakdown.

It is found in the plastid. The protein localises to the chloroplast thylakoid membrane. It carries out the reaction 7(1)-hydroxychlorophyllide a + NAD(+) = chlorophyllide b + NADH + H(+). The catalysed reaction is 7(1)-hydroxychlorophyllide a + NADP(+) = chlorophyllide b + NADPH + H(+). In terms of biological role, involved in chlorophyll b degradation. Belongs to the chlorophyll catabolic enzymes (CCEs). This is Probable chlorophyll(ide) b reductase NYC1, chloroplastic (NYC1) from Arabidopsis thaliana (Mouse-ear cress).